Reading from the N-terminus, the 334-residue chain is Holliday junction branch migration complex subunit RuvB (334 aa).

Residues 4-186 (ADRLIAPENP…FGITQRLEYY (183 aa)) are large ATPase domain (RuvB-L). Residues I25, R26, G67, K70, T71, T72, 133-135 (EDY), R176, Y186, and R223 each bind ATP. T71 contributes to the Mg(2+) binding site. Residues 187–257 (KVKDLQDIVQ…TADKALNMLD (71 aa)) form a small ATPAse domain (RuvB-S) region. Positions 260 to 334 (AEGFDYMDRK…RAYLHFGIEK (75 aa)) are head domain (RuvB-H). The DNA site is built by R315 and R320.

Belongs to the RuvB family. As to quaternary structure, homohexamer. Forms an RuvA(8)-RuvB(12)-Holliday junction (HJ) complex. HJ DNA is sandwiched between 2 RuvA tetramers; dsDNA enters through RuvA and exits via RuvB. An RuvB hexamer assembles on each DNA strand where it exits the tetramer. Each RuvB hexamer is contacted by two RuvA subunits (via domain III) on 2 adjacent RuvB subunits; this complex drives branch migration. In the full resolvosome a probable DNA-RuvA(4)-RuvB(12)-RuvC(2) complex forms which resolves the HJ.

It is found in the cytoplasm. It catalyses the reaction ATP + H2O = ADP + phosphate + H(+). The RuvA-RuvB-RuvC complex processes Holliday junction (HJ) DNA during genetic recombination and DNA repair, while the RuvA-RuvB complex plays an important role in the rescue of blocked DNA replication forks via replication fork reversal (RFR). RuvA specifically binds to HJ cruciform DNA, conferring on it an open structure. The RuvB hexamer acts as an ATP-dependent pump, pulling dsDNA into and through the RuvAB complex. RuvB forms 2 homohexamers on either side of HJ DNA bound by 1 or 2 RuvA tetramers; 4 subunits per hexamer contact DNA at a time. Coordinated motions by a converter formed by DNA-disengaged RuvB subunits stimulates ATP hydrolysis and nucleotide exchange. Immobilization of the converter enables RuvB to convert the ATP-contained energy into a lever motion, pulling 2 nucleotides of DNA out of the RuvA tetramer per ATP hydrolyzed, thus driving DNA branch migration. The RuvB motors rotate together with the DNA substrate, which together with the progressing nucleotide cycle form the mechanistic basis for DNA recombination by continuous HJ branch migration. Branch migration allows RuvC to scan DNA until it finds its consensus sequence, where it cleaves and resolves cruciform DNA. This chain is Holliday junction branch migration complex subunit RuvB, found in Vibrio campbellii (strain ATCC BAA-1116).